Consider the following 560-residue polypeptide: Ubiquitin carboxyl-terminal hydrolase MINDY-3 homolog (560 aa).

The segment covering Met1–Glu13 has biased composition (basic and acidic residues). 2 disordered regions span residues Met1–Ala30 and Ser44–Ala91. Low complexity-rich tracts occupy residues Ser15–Ala30 and Thr52–Ser81. The active-site Nucleophile is Cys139. Residues Thr203–Glu237 are disordered. Ser212 and Ser219 each carry phosphoserine. The active-site Proton acceptor is His403.

The protein belongs to the MINDY deubiquitinase family. FAM188 subfamily.

The catalysed reaction is Thiol-dependent hydrolysis of ester, thioester, amide, peptide and isopeptide bonds formed by the C-terminal Gly of ubiquitin (a 76-residue protein attached to proteins as an intracellular targeting signal).. Functionally, hydrolase that can remove 'Lys-48'-linked conjugated ubiquitin from proteins. This chain is Ubiquitin carboxyl-terminal hydrolase MINDY-3 homolog (mindy3), found in Drosophila melanogaster (Fruit fly).